We begin with the raw amino-acid sequence, 419 residues long: 3-isopropylmalate dehydratase large subunit (419 aa).

Residues cysteine 300, cysteine 360, and cysteine 363 each contribute to the [4Fe-4S] cluster site.

The protein belongs to the aconitase/IPM isomerase family. LeuC type 2 subfamily. In terms of assembly, heterodimer of LeuC and LeuD. [4Fe-4S] cluster serves as cofactor.

It catalyses the reaction (2R,3S)-3-isopropylmalate = (2S)-2-isopropylmalate. Its pathway is amino-acid biosynthesis; L-leucine biosynthesis; L-leucine from 3-methyl-2-oxobutanoate: step 2/4. Its function is as follows. Catalyzes the isomerization between 2-isopropylmalate and 3-isopropylmalate, via the formation of 2-isopropylmaleate. The protein is 3-isopropylmalate dehydratase large subunit of Nitratidesulfovibrio vulgaris (strain DP4) (Desulfovibrio vulgaris).